A 1179-amino-acid polypeptide reads, in one-letter code: Tubulin glycylase 3B (1179 aa).

Polar residues predominate over residues 177 to 199 (NKGQTNNSNRENGGNFHSEQSPK). Disordered stretches follow at residues 177–208 (NKGQ…VVSG), 250–278 (QQPQ…LPLS), 592–625 (KVLS…AVQQ), and 853–890 (QKQH…LKQD). Residues 592–601 (KVLSNTKSKD) show a composition bias toward basic and acidic residues. 2 stretches are compositionally biased toward polar residues: residues 614-625 (KSKSNNQNAVQQ) and 881-890 (AQSSTSLKQD). The 363-residue stretch at 790-1152 (FIDFYETVDF…SMAKKGTKKN (363 aa)) folds into the TTL domain. ATP contacts are provided by residues 965-968 (QKYI), Lys-978, and Asp-980.

Its subcellular location is the cell projection. It is found in the cilium. It localises to the cytoplasm. The protein localises to the cytoskeleton. The protein resides in the cilium axoneme. Polyglycylase which modifies tubulin, generating side chains of glycine on the gamma-carboxyl groups of specific glutamate residues within the C-terminal tail of tubulin. Polyglycylates tubulin, with a preference for alpha-tubulin toward beta-tubulin. The protein is Tubulin glycylase 3B (TTLL3B) of Tetrahymena thermophila (strain SB210).